The following is a 304-amino-acid chain: Protease HtpX homolog (304 aa).

The next 2 membrane-spanning stretches (helical) occupy residues 14–34 (VFIVIGFFIFVLMVGAAIGII) and 39–59 (YLNGLILAAVIGAFYILIMVM). H144 provides a ligand contact to Zn(2+). E145 is a catalytic residue. Residue H148 participates in Zn(2+) binding. 2 helical membrane-spanning segments follow: residues 161-181 (IALVAVIAILSDLAMRMIFWG) and 202-222 (LIIYIVALVFVVLAPIIATAI). E231 provides a ligand contact to Zn(2+). A disordered region spans residues 276-295 (SPLKSKKDKPGIFDSHPPIS).

It belongs to the peptidase M48B family. Requires Zn(2+) as cofactor.

The protein resides in the cell membrane. In Listeria welshimeri serovar 6b (strain ATCC 35897 / DSM 20650 / CCUG 15529 / CIP 8149 / NCTC 11857 / SLCC 5334 / V8), this protein is Protease HtpX homolog.